Consider the following 305-residue polypeptide: Glycine betaine-binding protein YehZ (305 aa).

Positions 1-23 are cleaved as a signal peptide; that stretch reads MPLLKLWAGSLVMLAAVSLPLQA.

It belongs to the OsmX family. The complex is composed of two ATP-binding proteins (YehX), two transmembrane proteins (YehW and YehY) and a solute-binding protein (YehZ).

Its subcellular location is the periplasm. Functionally, part of an ABC transporter complex involved in low-affinity glycine betaine uptake. Binds glycine betaine with low affinity. This Escherichia coli (strain K12) protein is Glycine betaine-binding protein YehZ (yehZ).